A 1581-amino-acid chain; its full sequence is ATP-binding cassette sub-family C member 8 (1581 aa).

The Extracellular segment spans residues 1–30 (MPLAFCGSENHSAAYRVDQGVLNNGCFVDA). Cys-6 and Cys-26 are oxidised to a cystine. Asn-10 carries an N-linked (GlcNAc...) asparagine glycan. A helical transmembrane segment spans residues 31 to 47 (LNVVPHVFLLFITFPIL). At 48 to 72 (FIGWGSQSSKVHIHHSTWLHFPGHN) the chain is on the cytoplasmic side. A helical transmembrane segment spans residues 73 to 89 (LRWILTFMLLFVLVCEI). Over 90–106 (AEGILSDGVTESHHLHL) the chain is Extracellular. Residues 107 to 123 (YMPAGMAFMAAVTSVVY) traverse the membrane as a helical segment. Residues 124 to 136 (YHNIETSNFPKLL) lie on the Cytoplasmic side of the membrane. A helical transmembrane segment spans residues 137–153 (IALLVYWTLAFITKTIK). Topologically, residues 154 to 169 (FVKFLDHAIGFSQLRF) are extracellular. A helical transmembrane segment spans residues 170 to 186 (CLTGLLVILYGMLLLVE). Over 187 to 303 (VNVIRVRRYI…AFGRRLVLSS (117 aa)) the chain is Cytoplasmic. The 304-residue stretch at 299–602 (LVLSSTFRIL…LSSVVRSTVK (304 aa)) folds into the ABC transmembrane type-1 1 domain. The chain crosses the membrane as a helical span at residues 304 to 319 (TFRILADLLGFAGPLC). At 320-356 (IFGIVDHLGKENDVFQPKTQFLGVYFVSSQEFLANAY) the chain is on the extracellular side. Residues 357–372 (VLAVLLFLALLLQRTF) traverse the membrane as a helical segment. Residues 373-438 (LQASYYVAIE…MWFFFLCPNL (66 aa)) are Cytoplasmic-facing. A helical transmembrane segment spans residues 439 to 454 (WAMPVQIIVGVILLYY). The Extracellular portion of the chain corresponds to 455 to 460 (ILGVSA). Residues 461-473 (LIGAAVIILLAPV) traverse the membrane as a helical segment. The Cytoplasmic portion of the chain corresponds to 474–541 (QYFVATKLSQ…SLRAFAIYTS (68 aa)). The chain crosses the membrane as a helical span at residues 542–557 (ISIFMNTAIPIAAVLI). The Extracellular portion of the chain corresponds to 558 to 576 (TFVGHVSFFKEADFSPSVA). The chain crosses the membrane as a helical span at residues 577–592 (FASLSLFHILVTPLFL). Topologically, residues 593-1012 (LSSVVRSTVK…YLSSAGILLL (420 aa)) are cytoplasmic. The ABC transporter 1 domain maps to 679–929 (VQIMGGYFTW…ECQLFEHWKT (251 aa)). ATP-binding residues include Trp-688, Gly-716, Ser-720, and Ser-721. Residue Ser-720 coordinates Mg(2+). Gln-774 contributes to the Mg(2+) binding site. A compositionally biased stretch (basic and acidic residues) spans 935–949 (DQELEKETVTERKAT). The disordered stretch occupies residues 935 to 987 (DQELEKETVTERKATEPPQGLSRAMSSRDGLLQDEEEEEEEAAESEEDDNLSS). A compositionally biased stretch (acidic residues) spans 966–984 (LQDEEEEEEEAAESEEDDN). An ABC transmembrane type-1 2 domain is found at 1012 to 1306 (LSLLVFSQLL…MVRNLADMEL (295 aa)). The helical transmembrane segment at 1013–1030 (SLLVFSQLLKHMVLVAID) threads the bilayer. Topologically, residues 1031–1066 (YWLAKWTDSALTLTPAARNCSLSQECTLDQTVYAMV) are extracellular. Asn-1049 carries N-linked (GlcNAc...) asparagine glycosylation. The chain crosses the membrane as a helical span at residues 1067-1083 (FTVLCSLGIVLCLVTSV). Residues 1084 to 1142 (TVEWTGLKVAKRLHRSLLNRIILAPMRFFETTPLGSILNRFSSDCNTIDQHIPSTLECL) are Cytoplasmic-facing. Residues 1143–1160 (SRSTLLCVSALAVISYVT) traverse the membrane as a helical segment. A topological domain (extracellular) is located at residue Pro-1161. Residues 1162–1174 (VFLVALLPLAIVC) form a helical membrane-spanning segment. At 1175–1248 (YFIQKYFRVA…FLTAANRWLE (74 aa)) the chain is on the cytoplasmic side. A helical membrane pass occupies residues 1249–1264 (VRMEYIGACVVLIAAV). Residues 1265–1280 (TSISNSLHRELSAGLV) are Extracellular-facing. A helical transmembrane segment spans residues 1281–1296 (GLGLTYALMVSNYLNW). The Cytoplasmic segment spans residues 1297 to 1581 (MVRNLADMEL…VFASFVRADK (285 aa)). The ABC transporter 2 domain maps to 1344 to 1578 (IQIQNLSVRY…KDSVFASFVR (235 aa)). ADP contacts are provided by Thr-1380, Gly-1381, Gly-1383, Lys-1384, Ser-1385, and Ser-1386. ATP is bound at residue Ser-1482.

This sequence belongs to the ABC transporter superfamily. ABCC family. Conjugate transporter (TC 3.A.1.208) subfamily. In terms of assembly, forms an heterooctamer with KCNJ11; four ABCC8/SUR1 molecules interact with one KCNJ11 homotetramer.

The protein localises to the cell membrane. With respect to regulation, KATP channels are regulated by cytoplasmic ATP/ADP ratios; ATP inhibits the channel by closing the pore, while ADP activates the channel. Activated by phosphatidylinositol 4,5-biphosphate (PtdIns(4,5)P2). Its function is as follows. Regulator subunit of pancreatic ATP-sensitive potassium channel (KATP), playing a major role in the regulation of insulin release. In pancreatic cells, it forms KATP channels with KCNJ11; KCNJ11 forms the channel pore while ABCC8 is required for activation and regulation. The sequence is that of ATP-binding cassette sub-family C member 8 (ABCC8) from Homo sapiens (Human).